The sequence spans 58 residues: U7-ctenitoxin-Pr1a (58 aa).

6 disulfides stabilise this stretch: Cys-2-Cys-16, Cys-9-Cys-22, Cys-13-Cys-48, Cys-15-Cys-40, Cys-18-Cys-55, and Cys-24-Cys-38.

As to expression, expressed by the venom gland.

It localises to the secreted. Probable neurotoxin. This is U7-ctenitoxin-Pr1a from Phoneutria reidyi (Brazilian Amazonian armed spider).